The primary structure comprises 326 residues: Palmitoyltransferase ERF2 (326 aa).

Over 1-62 (MKGNPSTHEV…RLRAVKTARP (62 aa)) the chain is Cytoplasmic. Residues 63–83 (FSLVVLFLILSPMVLFSVFEA) form a helical membrane-spanning segment. The Lumenal segment spans residues 84–90 (HRLWHTR). Residues 91 to 111 (YGYKALVVLFYYAWAWSLLSF) traverse the membrane as a helical segment. Residues 112–202 (TKTATSDPGV…NCVGQRNYRY (91 aa)) are Cytoplasmic-facing. One can recognise a DHHC domain in the interval 158–208 (KYCHTCKIWRPPRASHCSVCECCVLTHDHHCIWVNNCVGQRNYRYFLAFLL). Residue Cys-188 is the S-palmitoyl cysteine intermediate of the active site. A helical membrane pass occupies residues 203–223 (FLAFLLSSTLACALLIANCAL). The Lumenal segment spans residues 224–241 (HLHRALHEGIRVSHRPLP). The chain crosses the membrane as a helical span at residues 242–262 (VAVLLCVYAAVLCVYPVILLG). Over 263-326 (YHVAMSGTQQ…GPRSCNYRYR (64 aa)) the chain is Cytoplasmic.

It belongs to the DHHC palmitoyltransferase family. ERF2/ZDHHC9 subfamily. As to quaternary structure, interacts with ERF4. Post-translationally, autopalmitoylated.

Its subcellular location is the endoplasmic reticulum membrane. It catalyses the reaction L-cysteinyl-[protein] + hexadecanoyl-CoA = S-hexadecanoyl-L-cysteinyl-[protein] + CoA. Functionally, the ERF2-ERF4 complex is a palmitoyltransferase specific for Ras proteins. The chain is Palmitoyltransferase ERF2 (ERF2) from Candida glabrata (strain ATCC 2001 / BCRC 20586 / JCM 3761 / NBRC 0622 / NRRL Y-65 / CBS 138) (Yeast).